The sequence spans 154 residues: NADPH-dependent 7-cyano-7-deazaguanine reductase (154 aa).

The active-site Thioimide intermediate is cysteine 52. The Proton donor role is filled by aspartate 59. Residues 74–76 and 93–94 each bind substrate; these read VES and HE.

This sequence belongs to the GTP cyclohydrolase I family. QueF type 1 subfamily.

Its subcellular location is the cytoplasm. The enzyme catalyses 7-aminomethyl-7-carbaguanine + 2 NADP(+) = 7-cyano-7-deazaguanine + 2 NADPH + 3 H(+). The protein operates within tRNA modification; tRNA-queuosine biosynthesis. In terms of biological role, catalyzes the NADPH-dependent reduction of 7-cyano-7-deazaguanine (preQ0) to 7-aminomethyl-7-deazaguanine (preQ1). This is NADPH-dependent 7-cyano-7-deazaguanine reductase from Ruegeria sp. (strain TM1040) (Silicibacter sp.).